The following is a 199-amino-acid chain: Protein P1 (199 aa).

This chain is Protein P1, found in Rice tungro bacilliform virus (isolate Philippines) (RTBV).